A 415-amino-acid chain; its full sequence is Squalene synthase 12 (415 aa).

The next 2 helical transmembrane spans lie at 281 to 301 (AIFR…ALCF) and 391 to 411 (LIAI…SNLL).

It belongs to the phytoene/squalene synthase family. Requires Mg(2+) as cofactor. It depends on Mn(2+) as a cofactor.

It localises to the endoplasmic reticulum membrane. It catalyses the reaction 2 (2E,6E)-farnesyl diphosphate + NADH + H(+) = squalene + 2 diphosphate + NAD(+). The catalysed reaction is 2 (2E,6E)-farnesyl diphosphate + NADPH + H(+) = squalene + 2 diphosphate + NADP(+). It participates in terpene metabolism; lanosterol biosynthesis; lanosterol from farnesyl diphosphate: step 1/3. Its function is as follows. Component of the triterpene saponins (e.g. ginsenosides or panaxosides) and phytosterols biosynthetic pathways. Catalyzes the biosynthesis of squalene. This is Squalene synthase 12 from Panax ginseng (Korean ginseng).